The chain runs to 150 residues: Nucleoside diphosphate kinase (150 aa).

Positions 10, 58, 86, 92, 103, and 113 each coordinate ATP. His116 serves as the catalytic Pros-phosphohistidine intermediate.

It belongs to the NDK family. Requires Mg(2+) as cofactor.

The protein localises to the cytoplasm. The catalysed reaction is a 2'-deoxyribonucleoside 5'-diphosphate + ATP = a 2'-deoxyribonucleoside 5'-triphosphate + ADP. It carries out the reaction a ribonucleoside 5'-diphosphate + ATP = a ribonucleoside 5'-triphosphate + ADP. Major role in the synthesis of nucleoside triphosphates other than ATP. The ATP gamma phosphate is transferred to the NDP beta phosphate via a ping-pong mechanism, using a phosphorylated active-site intermediate. The protein is Nucleoside diphosphate kinase of Methanobrevibacter smithii (strain ATCC 35061 / DSM 861 / OCM 144 / PS).